The sequence spans 40 residues: Photosystem II reaction center protein L (40 aa).

Residues 19 to 39 (SLYWGLLLIFVLAVLFSNYFF) form a helical membrane-spanning segment.

Belongs to the PsbL family. As to quaternary structure, PSII is composed of 1 copy each of membrane proteins PsbA, PsbB, PsbC, PsbD, PsbE, PsbF, PsbH, PsbI, PsbJ, PsbK, PsbL, PsbM, PsbT, PsbX, PsbY, PsbZ, Psb30/Ycf12, at least 3 peripheral proteins of the oxygen-evolving complex and a large number of cofactors. It forms dimeric complexes.

It localises to the plastid. Its subcellular location is the chloroplast thylakoid membrane. One of the components of the core complex of photosystem II (PSII). PSII is a light-driven water:plastoquinone oxidoreductase that uses light energy to abstract electrons from H(2)O, generating O(2) and a proton gradient subsequently used for ATP formation. It consists of a core antenna complex that captures photons, and an electron transfer chain that converts photonic excitation into a charge separation. This subunit is found at the monomer-monomer interface and is required for correct PSII assembly and/or dimerization. This chain is Photosystem II reaction center protein L, found in Nandina domestica (Heavenly bamboo).